The chain runs to 897 residues: DNA mismatch repair protein MutS (897 aa).

ATP is bound at residue 654–661 (GPNMAGKS).

This sequence belongs to the DNA mismatch repair MutS family.

Functionally, this protein is involved in the repair of mismatches in DNA. It is possible that it carries out the mismatch recognition step. This protein has a weak ATPase activity. This chain is DNA mismatch repair protein MutS, found in Maricaulis maris (strain MCS10) (Caulobacter maris).